A 486-amino-acid chain; its full sequence is Glycogen synthase (486 aa).

K15 contributes to the ADP-alpha-D-glucose binding site.

This sequence belongs to the glycosyltransferase 1 family. Bacterial/plant glycogen synthase subfamily.

The catalysed reaction is [(1-&gt;4)-alpha-D-glucosyl](n) + ADP-alpha-D-glucose = [(1-&gt;4)-alpha-D-glucosyl](n+1) + ADP + H(+). It functions in the pathway glycan biosynthesis; glycogen biosynthesis. Synthesizes alpha-1,4-glucan chains using ADP-glucose. In Thermotoga maritima (strain ATCC 43589 / DSM 3109 / JCM 10099 / NBRC 100826 / MSB8), this protein is Glycogen synthase.